A 157-amino-acid chain; its full sequence is SsrA-binding protein (157 aa).

The interval 131–157 (KQLHDKRESVKQRDWQRDKARLMRDKG) is disordered. Basic and acidic residues predominate over residues 132–157 (QLHDKRESVKQRDWQRDKARLMRDKG).

It belongs to the SmpB family.

The protein localises to the cytoplasm. Its function is as follows. Required for rescue of stalled ribosomes mediated by trans-translation. Binds to transfer-messenger RNA (tmRNA), required for stable association of tmRNA with ribosomes. tmRNA and SmpB together mimic tRNA shape, replacing the anticodon stem-loop with SmpB. tmRNA is encoded by the ssrA gene; the 2 termini fold to resemble tRNA(Ala) and it encodes a 'tag peptide', a short internal open reading frame. During trans-translation Ala-aminoacylated tmRNA acts like a tRNA, entering the A-site of stalled ribosomes, displacing the stalled mRNA. The ribosome then switches to translate the ORF on the tmRNA; the nascent peptide is terminated with the 'tag peptide' encoded by the tmRNA and targeted for degradation. The ribosome is freed to recommence translation, which seems to be the essential function of trans-translation. In Methylorubrum populi (strain ATCC BAA-705 / NCIMB 13946 / BJ001) (Methylobacterium populi), this protein is SsrA-binding protein.